Reading from the N-terminus, the 438-residue chain is Plasmalemma vesicle-associated protein (438 aa).

At 1–26 the chain is on the cytoplasmic side; that stretch reads MGLSMDRSPYARTGDQQRGCWYYLRY. A helical; Signal-anchor for type II membrane protein transmembrane segment spans residues 27–47; sequence FFLFVSLIQFLIILGLVLFMI. Topologically, residues 48–438 are extracellular; the sequence is YGNVHATTES…VVNPAAQPSG (391 aa). N-linked (GlcNAc...) asparagine glycans are attached at residues asparagine 82, asparagine 88, asparagine 112, and asparagine 150. 3 coiled-coil regions span residues 140–160, 189–224, and 281–383; these read KQCQEQLKEVNKTCEALLFKL, KRQTEEQLEACGKARERQQQEQQVTEENLRKVQSLC, and EELA…ISAL. A disordered region spans residues 391-413; that stretch reads SLPAVPPRVSGPPPNPPPIDPAS. Pro residues predominate over residues 394 to 410; it reads AVPPRVSGPPPNPPPID.

In terms of assembly, homodimer. Expressed in lung, kidney, spleen, heart, muscle, eye, pancreas, thyroid, thymus, submaxillary gland, prostate, epididymis, uterus and liver.

The protein localises to the cell membrane. Its subcellular location is the membrane. It is found in the caveola. It localises to the cytoplasm. The protein resides in the perinuclear region. Its function is as follows. Endothelial cell-specific membrane protein involved in the formation of the diaphragms that bridge endothelial fenestrae. It is also required for the formation of stomata of caveolae and transendothelial channels. Functions in microvascular permeability, endothelial fenestrae contributing to the passage of water and solutes and regulating transcellular versus paracellular flow in different organs. Plays a specific role in embryonic development. This is Plasmalemma vesicle-associated protein (Plvap) from Mus musculus (Mouse).